The sequence spans 200 residues: MSKYAGIVLAGGMSSRFGEPKALASWQGSTFIEHILKVMTSTLQEVVVISHSDIKERVEKLVQVPVIEDIPHYKGNGPLAGIVSGMEYIEADWYAIMPCDAPNVSHEWFTILLEQTSNEYDAVVPIINGRKQPLLAAYHNRVKEKIYALLQDEKRSMGQLLSQCNVKYVSGEDVQANADWFINVNTKEEYVQAQKDLSNK.

GTP is bound by residues 9 to 11, Lys21, Asp69, and Asp100; that span reads LAG. Asp100 contributes to the Mg(2+) binding site.

This sequence belongs to the MobA family. Mg(2+) is required as a cofactor.

It is found in the cytoplasm. The enzyme catalyses Mo-molybdopterin + GTP + H(+) = Mo-molybdopterin guanine dinucleotide + diphosphate. Functionally, transfers a GMP moiety from GTP to Mo-molybdopterin (Mo-MPT) cofactor (Moco or molybdenum cofactor) to form Mo-molybdopterin guanine dinucleotide (Mo-MGD) cofactor. The protein is Probable molybdenum cofactor guanylyltransferase of Bacillus anthracis (strain CDC 684 / NRRL 3495).